Reading from the N-terminus, the 251-residue chain is Probable transcriptional regulatory protein Franean1_5147 (251 aa).

It belongs to the TACO1 family.

The protein resides in the cytoplasm. This chain is Probable transcriptional regulatory protein Franean1_5147, found in Parafrankia sp. (strain EAN1pec).